The primary structure comprises 296 residues: Probable GTP 3',8-cyclase (296 aa).

The Radical SAM core domain maps to 5–230 (EYGRVVTNLR…HRRTQYFTPK (226 aa)). R14 provides a ligand contact to GTP. [4Fe-4S] cluster-binding residues include C21 and C25. Y27 contributes to the S-adenosyl-L-methionine binding site. C28 contacts [4Fe-4S] cluster. K61 contributes to the GTP binding site. G65 lines the S-adenosyl-L-methionine pocket. Position 89 (T89) interacts with GTP. An S-adenosyl-L-methionine-binding site is contributed by S113. K150 is a GTP binding site. [4Fe-4S] cluster-binding residues include C245 and C248. Residue 250–252 (RMR) coordinates GTP. C262 serves as a coordination point for [4Fe-4S] cluster.

Belongs to the radical SAM superfamily. MoaA family. [4Fe-4S] cluster is required as a cofactor.

It catalyses the reaction GTP + AH2 + S-adenosyl-L-methionine = (8S)-3',8-cyclo-7,8-dihydroguanosine 5'-triphosphate + 5'-deoxyadenosine + L-methionine + A + H(+). It participates in cofactor biosynthesis; molybdopterin biosynthesis. Its function is as follows. Catalyzes the cyclization of GTP to (8S)-3',8-cyclo-7,8-dihydroguanosine 5'-triphosphate. The sequence is that of Probable GTP 3',8-cyclase from Archaeoglobus fulgidus (strain ATCC 49558 / DSM 4304 / JCM 9628 / NBRC 100126 / VC-16).